The following is a 197-amino-acid chain: Holliday junction branch migration complex subunit RuvA (197 aa).

The domain I stretch occupies residues 1-63; it reads MYAYLKGIIT…EDAHLLYGFR (63 aa). The interval 64–142 is domain II; sequence SEDEKKLFLS…VAGDDLPAKV (79 aa). The interval 143-147 is flexible linker; sequence AVQAS. The domain III stretch occupies residues 148–197; it reads AENQELEEAMEAMLALGYKATELKKIKKFFEGTTDTAENYIKSALKMLVK.

This sequence belongs to the RuvA family. In terms of assembly, homotetramer. Forms an RuvA(8)-RuvB(12)-Holliday junction (HJ) complex. HJ DNA is sandwiched between 2 RuvA tetramers; dsDNA enters through RuvA and exits via RuvB. An RuvB hexamer assembles on each DNA strand where it exits the tetramer. Each RuvB hexamer is contacted by two RuvA subunits (via domain III) on 2 adjacent RuvB subunits; this complex drives branch migration. In the full resolvosome a probable DNA-RuvA(4)-RuvB(12)-RuvC(2) complex forms which resolves the HJ.

It is found in the cytoplasm. Its function is as follows. The RuvA-RuvB-RuvC complex processes Holliday junction (HJ) DNA during genetic recombination and DNA repair, while the RuvA-RuvB complex plays an important role in the rescue of blocked DNA replication forks via replication fork reversal (RFR). RuvA specifically binds to HJ cruciform DNA, conferring on it an open structure. The RuvB hexamer acts as an ATP-dependent pump, pulling dsDNA into and through the RuvAB complex. HJ branch migration allows RuvC to scan DNA until it finds its consensus sequence, where it cleaves and resolves the cruciform DNA. The chain is Holliday junction branch migration complex subunit RuvA from Streptococcus pneumoniae serotype 19F (strain G54).